We begin with the raw amino-acid sequence, 158 residues long: MADIQTERAYQKQPTIFQNKKRVLLGETGKEKLPRYYKNIGLGFKTPKEAIEGTYIDKKCPFTGNVSIRGRILSGVVTKMKMQRTIVIRRDYLHYIRKYNRFEKRHKNMSVHLSPCFRDVHIGDIVTVGECRPLSKTVRFNVLKVTKAAGTKKQFQKF.

Ala-2 bears the N-acetylalanine mark. Arg-22 carries the citrulline modification. 3 positions are modified to N6-acetyllysine: Lys-38, Lys-45, and Lys-58. Cys-60 carries the S-palmitoyl cysteine lipid modification. Ser-67 bears the Phosphoserine mark. An Omega-N-methylarginine modification is found at Arg-69. Ser-110 bears the Phosphoserine mark.

Belongs to the universal ribosomal protein uS17 family. In terms of assembly, component of the small ribosomal subunit. Part of the small subunit (SSU) processome, composed of more than 70 proteins and the RNA chaperone small nucleolar RNA (snoRNA) U3. In terms of processing, citrullinated by PADI4.

The protein resides in the cytoplasm. The protein localises to the nucleus. It localises to the nucleolus. In terms of biological role, component of the small ribosomal subunit. The ribosome is a large ribonucleoprotein complex responsible for the synthesis of proteins in the cell. Part of the small subunit (SSU) processome, first precursor of the small eukaryotic ribosomal subunit. During the assembly of the SSU processome in the nucleolus, many ribosome biogenesis factors, an RNA chaperone and ribosomal proteins associate with the nascent pre-rRNA and work in concert to generate RNA folding, modifications, rearrangements and cleavage as well as targeted degradation of pre-ribosomal RNA by the RNA exosome. In Canis lupus familiaris (Dog), this protein is Small ribosomal subunit protein uS17 (RPS11).